Consider the following 402-residue polypeptide: Oxysterol-binding protein 12 (402 aa).

Residues 333–366 are disordered; that stretch reads NNNNDKETAEEKAKIEEKQRKEESERREKGILWE. Residues 336-366 show a composition bias toward basic and acidic residues; the sequence is NDKETAEEKAKIEEKQRKEESERREKGILWE.

This sequence belongs to the OSBP family.

This is Oxysterol-binding protein 12 (osbL) from Dictyostelium discoideum (Social amoeba).